The chain runs to 270 residues: Monofunctional glycosyltransferase (270 aa).

Residues 1–10 are compositionally biased toward polar residues; sequence MKRSQRMNNS. Residues 1 to 36 form a disordered region; it reads MKRSQRMNNSPERHSQYRNEPHYNTYYQPVGKPPKK. A compositionally biased stretch (basic and acidic residues) spans 11-21; that stretch reads PERHSQYRNEP. The helical transmembrane segment at 42–62 threads the bilayer; that stretch reads IFLRLFIIFVFIYALFIGLMY.

The protein belongs to the glycosyltransferase 51 family.

It is found in the cell membrane. The catalysed reaction is [GlcNAc-(1-&gt;4)-Mur2Ac(oyl-L-Ala-gamma-D-Glu-L-Lys-D-Ala-D-Ala)](n)-di-trans,octa-cis-undecaprenyl diphosphate + beta-D-GlcNAc-(1-&gt;4)-Mur2Ac(oyl-L-Ala-gamma-D-Glu-L-Lys-D-Ala-D-Ala)-di-trans,octa-cis-undecaprenyl diphosphate = [GlcNAc-(1-&gt;4)-Mur2Ac(oyl-L-Ala-gamma-D-Glu-L-Lys-D-Ala-D-Ala)](n+1)-di-trans,octa-cis-undecaprenyl diphosphate + di-trans,octa-cis-undecaprenyl diphosphate + H(+). The protein operates within cell wall biogenesis; peptidoglycan biosynthesis. Its function is as follows. Peptidoglycan polymerase that catalyzes glycan chain elongation using lipid-linked disaccharide-pentapeptide as the substrate. This Staphylococcus haemolyticus (strain JCSC1435) protein is Monofunctional glycosyltransferase.